A 293-amino-acid chain; its full sequence is Cell adhesion molecule CEACAM21 (293 aa).

The N-terminal stretch at 1 to 34 is a signal peptide; it reads MGPPSACPHRECIPWQGLLLTASLLTFWNAPTTA. Residues 35 to 240 are Extracellular-facing; that stretch reads WLFIASAPFE…TVKSDDNTLG (206 aa). The N-linked (GlcNAc...) asparagine glycan is linked to asparagine 111. Residues 147–231 enclose the Ig-like C2-type domain; sequence PSIQASSTTV…SNRSDPLKLT (85 aa). The cysteines at positions 166 and 214 are disulfide-linked. A helical membrane pass occupies residues 241 to 261; that stretch reads ILIGVLVGSLLVAALVCFLLL. Residues 262-293 lie on the Cytoplasmic side of the membrane; that stretch reads RKTGRASDQSDFREQQPPASTPGHGPSDSSIS. Residues 267–293 are disordered; sequence ASDQSDFREQQPPASTPGHGPSDSSIS.

It belongs to the immunoglobulin superfamily. CEA family.

It is found in the membrane. This is Cell adhesion molecule CEACAM21 from Homo sapiens (Human).